The primary structure comprises 101 residues: Small ribosomal subunit protein uS14 (101 aa).

Residues 49–70 (QSLPRDSSPSRQRNRCNQTGRP) are disordered. Positions 52–68 (PRDSSPSRQRNRCNQTG) are enriched in polar residues.

It belongs to the universal ribosomal protein uS14 family. In terms of assembly, part of the 30S ribosomal subunit. Contacts proteins S3 and S10.

In terms of biological role, binds 16S rRNA, required for the assembly of 30S particles and may also be responsible for determining the conformation of the 16S rRNA at the A site. This Yersinia pseudotuberculosis serotype O:1b (strain IP 31758) protein is Small ribosomal subunit protein uS14.